The sequence spans 648 residues: Probable alpha-galactosidase D (648 aa).

The first 16 residues, methionine 1–alanine 16, serve as a signal peptide directing secretion. N-linked (GlcNAc...) asparagine glycans are attached at residues asparagine 84 and asparagine 90. Cysteine 123 and cysteine 156 are joined by a disulfide. Aspartate 154 (nucleophile) is an active-site residue. Glutamate 199–aspartate 203 is a substrate binding site. Catalysis depends on aspartate 221, which acts as the Proton donor. Residues asparagine 339, asparagine 350, asparagine 505, and asparagine 572 are each glycosylated (N-linked (GlcNAc...) asparagine).

This sequence belongs to the glycosyl hydrolase 27 family.

Its subcellular location is the secreted. The enzyme catalyses Hydrolysis of terminal, non-reducing alpha-D-galactose residues in alpha-D-galactosides, including galactose oligosaccharides, galactomannans and galactolipids.. Functionally, hydrolyzes a variety of simple alpha-D-galactoside as well as more complex molecules such as oligosaccharides and polysaccharides. In Aspergillus fumigatus (strain CBS 144.89 / FGSC A1163 / CEA10) (Neosartorya fumigata), this protein is Probable alpha-galactosidase D (aglD).